We begin with the raw amino-acid sequence, 271 residues long: uncharacterized protein (271 aa).

This sequence belongs to the HAD-like hydrolase superfamily.

This is an uncharacterized protein from Staphylococcus aureus.